A 54-amino-acid polypeptide reads, in one-letter code: Ovomucoid (54 aa).

The Kazal-like domain occupies 4 to 54 (VDCSDYPKPVCSLEYMPLCGSDSKTYSNKCDFCNAFVDSNGTLSLSHFGKC). Cystine bridges form between C6-C36, C14-C33, and C22-C54. A glycan (N-linked (GlcNAc...) asparagine) is linked at N43.

The protein localises to the secreted. The sequence is that of Ovomucoid from Circus aeruginosus (Western marsh harrier).